The following is a 143-amino-acid chain: Large ribosomal subunit protein uL15 (143 aa).

Composition is skewed to basic residues over residues 1–13 and 23–38; these read MIRK…KMRG and KKHR…GNAG. Positions 1–38 are disordered; sequence MIRKSKKITKMRGSRTCGYGEAKKHRGAGHRGGRGNAG.

The protein belongs to the universal ribosomal protein uL15 family. As to quaternary structure, part of the 50S ribosomal subunit.

Functionally, binds to the 23S rRNA. In Methanococcus maripaludis (strain C5 / ATCC BAA-1333), this protein is Large ribosomal subunit protein uL15.